A 246-amino-acid polypeptide reads, in one-letter code: Ribonuclease PH (246 aa).

Phosphate-binding positions include Arg-91 and 129–131 (GTR).

The protein belongs to the RNase PH family. As to quaternary structure, homohexameric ring arranged as a trimer of dimers.

The enzyme catalyses tRNA(n+1) + phosphate = tRNA(n) + a ribonucleoside 5'-diphosphate. Its function is as follows. Phosphorolytic 3'-5' exoribonuclease that plays an important role in tRNA 3'-end maturation. Removes nucleotide residues following the 3'-CCA terminus of tRNAs; can also add nucleotides to the ends of RNA molecules by using nucleoside diphosphates as substrates, but this may not be physiologically important. Probably plays a role in initiation of 16S rRNA degradation (leading to ribosome degradation) during starvation. This chain is Ribonuclease PH, found in Burkholderia ambifaria (strain MC40-6).